Consider the following 517-residue polypeptide: Zinc finger protein 215 (517 aa).

The SCAN box domain maps to 48 to 126; the sequence is RQKFRHFQYL…KDMVTLIEDV (79 aa). A KRAB domain is found at 164–237; sequence VTFKDVVVEF…EKEIPRKTIF (74 aa). C2H2-type zinc fingers lie at residues 379–401, 407–429, 462–484, and 490–512; these read YECY…QIIH, YKCS…QKLH, YQCV…QMIH, and FKCK…QKLH.

This sequence belongs to the krueppel C2H2-type zinc-finger protein family.

Its subcellular location is the nucleus. Functionally, may be involved in transcriptional regulation. The chain is Zinc finger protein 215 (ZNF215) from Homo sapiens (Human).